Reading from the N-terminus, the 173-residue chain is Crossover junction endodeoxyribonuclease RuvC (173 aa).

Residues Asp-8, Glu-69, and Asp-141 contribute to the active site. Mg(2+) is bound by residues Asp-8, Glu-69, and Asp-141.

Belongs to the RuvC family. In terms of assembly, homodimer which binds Holliday junction (HJ) DNA. The HJ becomes 2-fold symmetrical on binding to RuvC with unstacked arms; it has a different conformation from HJ DNA in complex with RuvA. In the full resolvosome a probable DNA-RuvA(4)-RuvB(12)-RuvC(2) complex forms which resolves the HJ. It depends on Mg(2+) as a cofactor.

It localises to the cytoplasm. It carries out the reaction Endonucleolytic cleavage at a junction such as a reciprocal single-stranded crossover between two homologous DNA duplexes (Holliday junction).. Its function is as follows. The RuvA-RuvB-RuvC complex processes Holliday junction (HJ) DNA during genetic recombination and DNA repair. Endonuclease that resolves HJ intermediates. Cleaves cruciform DNA by making single-stranded nicks across the HJ at symmetrical positions within the homologous arms, yielding a 5'-phosphate and a 3'-hydroxyl group; requires a central core of homology in the junction. The consensus cleavage sequence is 5'-(A/T)TT(C/G)-3'. Cleavage occurs on the 3'-side of the TT dinucleotide at the point of strand exchange. HJ branch migration catalyzed by RuvA-RuvB allows RuvC to scan DNA until it finds its consensus sequence, where it cleaves and resolves the cruciform DNA. The sequence is that of Crossover junction endodeoxyribonuclease RuvC from Xylella fastidiosa (strain Temecula1 / ATCC 700964).